Here is a 252-residue protein sequence, read N- to C-terminus: uncharacterized protein (252 aa).

16-40 contributes to the NADP(+) binding site; sequence LVTGASDGIGREAAMTYARYGATVI. Ser-152 is a substrate binding site. Tyr-165 serves as the catalytic Proton acceptor.

Belongs to the short-chain dehydrogenases/reductases (SDR) family.

This is an uncharacterized protein from Escherichia coli (strain K12).